The following is a 464-amino-acid chain: ATP synthase subunit beta (464 aa).

ATP is bound at residue 148–155 (GGAGVGKT).

This sequence belongs to the ATPase alpha/beta chains family. F-type ATPases have 2 components, CF(1) - the catalytic core - and CF(0) - the membrane proton channel. CF(1) has five subunits: alpha(3), beta(3), gamma(1), delta(1), epsilon(1). CF(0) has three main subunits: a(1), b(2) and c(9-12). The alpha and beta chains form an alternating ring which encloses part of the gamma chain. CF(1) is attached to CF(0) by a central stalk formed by the gamma and epsilon chains, while a peripheral stalk is formed by the delta and b chains.

The protein localises to the cell inner membrane. It catalyses the reaction ATP + H2O + 4 H(+)(in) = ADP + phosphate + 5 H(+)(out). In terms of biological role, produces ATP from ADP in the presence of a proton gradient across the membrane. The catalytic sites are hosted primarily by the beta subunits. The polypeptide is ATP synthase subunit beta (Acinetobacter baylyi (strain ATCC 33305 / BD413 / ADP1)).